A 285-amino-acid chain; its full sequence is 4-diphosphocytidyl-2-C-methyl-D-erythritol kinase (285 aa).

K9 is a catalytic residue. Position 89 to 99 (89 to 99 (PLGAGLGGGSS)) interacts with ATP. Residue D131 is part of the active site.

It belongs to the GHMP kinase family. IspE subfamily.

The catalysed reaction is 4-CDP-2-C-methyl-D-erythritol + ATP = 4-CDP-2-C-methyl-D-erythritol 2-phosphate + ADP + H(+). The protein operates within isoprenoid biosynthesis; isopentenyl diphosphate biosynthesis via DXP pathway; isopentenyl diphosphate from 1-deoxy-D-xylulose 5-phosphate: step 3/6. Its function is as follows. Catalyzes the phosphorylation of the position 2 hydroxy group of 4-diphosphocytidyl-2C-methyl-D-erythritol. This is 4-diphosphocytidyl-2-C-methyl-D-erythritol kinase from Thermodesulfovibrio yellowstonii (strain ATCC 51303 / DSM 11347 / YP87).